The chain runs to 142 residues: Hemoglobin subunit beta-1 (142 aa).

Residues 2 to 142 form the Globin domain; the sequence is SLTDEEIRLI…VTEALSCQYH (141 aa). H59 and H88 together coordinate heme b.

Belongs to the globin family. As to quaternary structure, heterotetramer of two alpha chains and two beta chains. As to expression, red blood cells.

Its function is as follows. Involved in oxygen transport from the lung to the various peripheral tissues. The protein is Hemoglobin subunit beta-1 (HBB1) of Torpedo marmorata (Marbled electric ray).